Reading from the N-terminus, the 202-residue chain is Holliday junction branch migration complex subunit RuvA (202 aa).

The domain I stretch occupies residues 1-63 (MIEYLKGAIV…EDAHLLYGFS (63 aa)). The tract at residues 64–142 (TKEERTLFGQ…LETSSDEILS (79 aa)) is domain II. A flexible linker region spans residues 143-153 (ARTAVGDAALN). The tract at residues 153–202 (NTIASGEEAISALKMLGFADPAIRKAVKSILSEDSSLAVEDIIKRALRML) is domain III.

It belongs to the RuvA family. Homotetramer. Forms an RuvA(8)-RuvB(12)-Holliday junction (HJ) complex. HJ DNA is sandwiched between 2 RuvA tetramers; dsDNA enters through RuvA and exits via RuvB. An RuvB hexamer assembles on each DNA strand where it exits the tetramer. Each RuvB hexamer is contacted by two RuvA subunits (via domain III) on 2 adjacent RuvB subunits; this complex drives branch migration. In the full resolvosome a probable DNA-RuvA(4)-RuvB(12)-RuvC(2) complex forms which resolves the HJ.

It is found in the cytoplasm. Its function is as follows. The RuvA-RuvB-RuvC complex processes Holliday junction (HJ) DNA during genetic recombination and DNA repair, while the RuvA-RuvB complex plays an important role in the rescue of blocked DNA replication forks via replication fork reversal (RFR). RuvA specifically binds to HJ cruciform DNA, conferring on it an open structure. The RuvB hexamer acts as an ATP-dependent pump, pulling dsDNA into and through the RuvAB complex. HJ branch migration allows RuvC to scan DNA until it finds its consensus sequence, where it cleaves and resolves the cruciform DNA. The sequence is that of Holliday junction branch migration complex subunit RuvA from Porphyromonas gingivalis (strain ATCC BAA-308 / W83).